A 306-amino-acid chain; its full sequence is MKNEFLNFEQIDRATWQQLHRKTTIPLSQSELNSIKSFNDRIQLHEVSDIYLPLVNLIHIYRKARKDLNFTKSLFLQKTIKPQPFIIGVSGSVAVGKSTTSRLLQILIARTFKYAKVELVTTDGFLQPNAVLEERQLLNKKGFPESYDMEKLIDFLDKIKNGYDCQIPVYSHEIYDIIPNKTQEIKSPDFLIVEGINVFQNPQNQRLYVSDYFDLSIYVDADVEHIETWYLERFQKLLTLAKNDPNNYYHRFTQMTYPEILSIAQNTWKNINLANLEKFIEPTRNRADIILHKAENHEIDKIYLKK.

An ATP-binding site is contributed by 91–98 (GSVAVGKS).

This sequence belongs to the prokaryotic pantothenate kinase family.

It localises to the cytoplasm. The catalysed reaction is (R)-pantothenate + ATP = (R)-4'-phosphopantothenate + ADP + H(+). The protein operates within cofactor biosynthesis; coenzyme A biosynthesis; CoA from (R)-pantothenate: step 1/5. The protein is Pantothenate kinase of Streptococcus suis (strain 05ZYH33).